Here is a 472-residue protein sequence, read N- to C-terminus: MFEVVIGLEVHAQLNTKTKIFCSCATSFGEAPNTNVCPTCLALPGALPVLNEEAVKKAIAFGKAVNATINKKSVFNRKNYFYPDLPKAYQISQFDIPIVEKGELFINVKGENKRIGITRAHLEEDAGKNIHESNFSKVDLNRAGTPLLEIVSEPELRSSDEAVAYLKKLHSIIRFLDISDANMQEGSFRCDANVSIRPKGDTKLYTRVEIKNLNSFRFIQKAIEYEVKRQSEAWEDGTYEQEVVQETRLFDTTNLVTRSMRGKEEAAEYRYFPDPDLLPVLLKDEFLDIKIPELPDEKKVRFIDKLGIKESDAEVLISSLEMSRFFESLISQNLNPKLCVNWLNTELMGLLKGELTIENSPVDAQKLGVLIKRIEDGTISAKAAKDVLAFVFENTSVEIDEAIEKLGLKQVSDDSAIEAVIEQILNANADKVAEYKSGKDKLFGFFVGQTMKEGKGAFNPAKVNEILKTKLG.

The protein belongs to the GatB/GatE family. GatB subfamily. As to quaternary structure, heterotrimer of A, B and C subunits.

It catalyses the reaction L-glutamyl-tRNA(Gln) + L-glutamine + ATP + H2O = L-glutaminyl-tRNA(Gln) + L-glutamate + ADP + phosphate + H(+). The catalysed reaction is L-aspartyl-tRNA(Asn) + L-glutamine + ATP + H2O = L-asparaginyl-tRNA(Asn) + L-glutamate + ADP + phosphate + 2 H(+). In terms of biological role, allows the formation of correctly charged Asn-tRNA(Asn) or Gln-tRNA(Gln) through the transamidation of misacylated Asp-tRNA(Asn) or Glu-tRNA(Gln) in organisms which lack either or both of asparaginyl-tRNA or glutaminyl-tRNA synthetases. The reaction takes place in the presence of glutamine and ATP through an activated phospho-Asp-tRNA(Asn) or phospho-Glu-tRNA(Gln). The protein is Aspartyl/glutamyl-tRNA(Asn/Gln) amidotransferase subunit B of Campylobacter jejuni subsp. jejuni serotype O:2 (strain ATCC 700819 / NCTC 11168).